Here is a 256-residue protein sequence, read N- to C-terminus: Ribosomal RNA small subunit methyltransferase A (256 aa).

S-adenosyl-L-methionine contacts are provided by histidine 12, leucine 14, glycine 39, glutamate 60, aspartate 83, and asparagine 101.

The protein belongs to the class I-like SAM-binding methyltransferase superfamily. rRNA adenine N(6)-methyltransferase family. RsmA subfamily.

It localises to the cytoplasm. It carries out the reaction adenosine(1518)/adenosine(1519) in 16S rRNA + 4 S-adenosyl-L-methionine = N(6)-dimethyladenosine(1518)/N(6)-dimethyladenosine(1519) in 16S rRNA + 4 S-adenosyl-L-homocysteine + 4 H(+). Specifically dimethylates two adjacent adenosines (A1518 and A1519) in the loop of a conserved hairpin near the 3'-end of 16S rRNA in the 30S particle. May play a critical role in biogenesis of 30S subunits. This chain is Ribosomal RNA small subunit methyltransferase A, found in Nitrosomonas eutropha (strain DSM 101675 / C91 / Nm57).